Consider the following 1198-residue polypeptide: Phosphatidylinositol-3,5-bisphosphate 3-phosphatase MTMR3 (1198 aa).

At serine 8 the chain carries Phosphoserine. One can recognise a Myotubularin phosphatase domain in the interval 155–576 (EHVTSRFKNE…RNLMLWSAVY (422 aa)). The segment covering 265–280 (SRSSGSKLSTRNTSRD) has biased composition (polar residues). A disordered region spans residues 265-285 (SRSSGSKLSTRNTSRDFPNGG). 3 residues coordinate a 1,2-diacyl-sn-glycero-3-phospho-(1D-myo-inositol-3,5-bisphosphate): asparagine 326, asparagine 351, and isoleucine 352. A 1,2-diacyl-sn-glycero-3-phospho-(1D-myo-inositol-3-phosphate) is bound by residues asparagine 326, asparagine 351, and isoleucine 352. The active-site Phosphocysteine intermediate is the cysteine 413. Residues serine 414, aspartate 415, glycine 416, tryptophan 417, aspartate 418, arginine 419, lysine 455, and arginine 459 each coordinate a 1,2-diacyl-sn-glycero-3-phospho-(1D-myo-inositol-3,5-bisphosphate). Serine 414, aspartate 415, glycine 416, tryptophan 417, aspartate 418, and arginine 419 together coordinate a 1,2-diacyl-sn-glycero-3-phospho-(1D-myo-inositol-3-phosphate). Residue arginine 459 coordinates a 1,2-diacyl-sn-glycero-3-phospho-(1D-myo-inositol-3-phosphate). The segment at 590–612 (CAPYPAPGTSPDDPPLSRLPKTR) is disordered. Residues 593 to 603 (YPAPGTSPDDP) show a composition bias toward pro residues. Phosphoserine is present on residues serine 613, serine 633, serine 647, and serine 651. Disordered stretches follow at residues 650-669 (LSSL…LGKP), 716-735 (EGKE…PEAS), and 855-891 (KSVS…SLVE). The segment covering 716–732 (EGKEDPLLEKESRRKTP) has biased composition (basic and acidic residues). Threonine 731 is subject to Phosphothreonine. Phosphoserine occurs at positions 906 and 909. 2 disordered regions span residues 933-974 (ETEN…SRQL) and 993-1019 (WLHS…DDDG). Over residues 999–1010 (GRPSATSSPDQP) the composition is skewed to polar residues. Residues 1029–1062 (QRLRQIESGHQQEVETLKKQVQELKSRLESQYLT) adopt a coiled-coil conformation. Position 1064 is a phosphoserine (serine 1064). The FYVE-type zinc-finger motif lies at 1119 to 1179 (DHLAAHCYAC…VCKSCYSSLH (61 aa)). Zn(2+)-binding residues include cysteine 1125, cysteine 1128, cysteine 1141, cysteine 1144, cysteine 1149, cysteine 1152, cysteine 1171, and cysteine 1174.

The protein belongs to the protein-tyrosine phosphatase family. Non-receptor class myotubularin subfamily. In terms of assembly, forms heterodimers with MTMR4 that recruit both CEP55 and PLK1; occurs during early mitosis, regulates the phosphorylation of CEP55 by PLK1 and its recruitment to the midbody where it mediates cell abscission. Phosphorylated by CDK1 during mitosis.

Its subcellular location is the cytoplasm. It is found in the cytosol. The protein resides in the membrane. It catalyses the reaction a 1,2-diacyl-sn-glycero-3-phospho-(1D-myo-inositol-3,5-bisphosphate) + H2O = a 1,2-diacyl-sn-glycero-3-phospho-(1D-myo-inositol-5-phosphate) + phosphate. The enzyme catalyses a 1,2-diacyl-sn-glycero-3-phospho-(1D-myo-inositol-3-phosphate) + H2O = a 1,2-diacyl-sn-glycero-3-phospho-(1D-myo-inositol) + phosphate. It carries out the reaction 1,2-dihexadecanoyl-sn-glycero-3-phospho-(1D-myo-inositol-3-phosphate) + H2O = 1,2-dihexadecanoyl-sn-glycero-3-phospho-(1D-myo-inositol) + phosphate. The catalysed reaction is 1,2-dioctanoyl-sn-glycero-3-phospho-(1-D-myo-inositol-3-phosphate) + H2O = 1,2-dioctanoyl-sn-glycero-3-phospho-(1D-myo-inositol) + phosphate. It catalyses the reaction 1,2-dihexadecanoyl-sn-glycero-3-phospho-(1D-myo-inositol-3,5-phosphate) + H2O = 1,2-dihexadecanoyl-sn-glycero-3-phospho-(1D-myo-inositol-5-phosphate) + phosphate. In terms of biological role, lipid phosphatase that specifically dephosphorylates the D-3 position of phosphatidylinositol 3-phosphate and phosphatidylinositol 3,5-bisphosphate, generating phosphatidylinositol and phosphatidylinositol 5-phosphate. Decreases the levels of phosphatidylinositol 3-phosphate, a phospholipid found in cell membranes where it acts as key regulator of both cell signaling and intracellular membrane traffic. Could also have a molecular sequestering/adapter activity and regulate biological processes independently of its phosphatase activity. It includes the regulation of midbody abscission during mitotic cytokinesis. The protein is Phosphatidylinositol-3,5-bisphosphate 3-phosphatase MTMR3 of Homo sapiens (Human).